Here is a 614-residue protein sequence, read N- to C-terminus: MAQKKYLQAKLTQFLREDRIQLWKPPYTKENKEVGLAVKDLAKKYSERLECCENEVENIIEEIRRKAIERGTGNEHYRTTGIATIEVFLPPRLRKHDKKSLLETRLHVTGRDLRCQIAETFGFQENYIKIVINKKQLQLGKSLEEQGVTHNVKAMVLELKQSEEDVRKNLQLEEEEQNEAELKERRIQRTKRGLEILAERAEMVVDPETMPYLDIANQTGRSLRIPPAERKALMLAMGYHEKGRAFLKRKEYGIALPCLLDADRYFCECKELLDTVDNYAVLQLDIVWCYFRLEQLECLDDAEKKLNLAQKCFKNCYGENHQRLVHIKGNCGKEKVLFLRLYLLQGIQNYHSGNGEEAREYLNKARQLFKELYIDPSKVHNLLQLGFTAQEARLGLRACDGNVDHAATHISNRREELAQIRKEEKEKRRRRLENVNTLRGMGYSTQAAKQALHQARGNLDDALKVLLSNPHMWWLQDADPENNSRQASPSQESINQLVYMGFDTVVAEAALRVFGGNVQLAAQTLAHHGGSLPPDLQFSGEDSSPTPSTSPSDSAGTSSASTDEDMETEAVNEILEDIPEHEEDYLDSTLEDEEVIIAEYLSYVESISSAAKNN.

2 coiled-coil regions span residues 36–71 and 151–206; these read LAVK…IERG and NVKA…MVVD. UBA domains lie at 373 to 413, 423 to 469, and 488 to 528; these read YIDP…ISNR, EEKE…LLSN, and SPSQ…LAHH. The short motif at 413–430 is the Nuclear localization signal element; sequence RREELAQIRKEEKEKRRR. The NEDD8-binding 1 stretch occupies residues 426–473; that stretch reads EKRRRRLENVNTLRGMGYSTQAAKQALHQARGNLDDALKVLLSNPHMW. Positions 531-590 are disordered; the sequence is SLPPDLQFSGEDSSPTPSTSPSDSAGTSSASTDEDMETEAVNEILEDIPEHEEDYLDSTL. Positions 539–561 are enriched in low complexity; it reads SGEDSSPTPSTSPSDSAGTSSAS. The NEDD8-binding 2 stretch occupies residues 549-597; it reads TSPSDSAGTSSASTDEDMETEAVNEILEDIPEHEEDYLDSTLEDEEVII. Over residues 562 to 590 the composition is skewed to acidic residues; that stretch reads TDEDMETEAVNEILEDIPEHEEDYLDSTL.

Directly interacts with NEDD8 and PSMD4/S5a, a member of the regulatory subunit of the 26S proteasome. Interacts with AIPL1. The interaction with UBD via UBA domains facilitates the linking of UBD-conjugated target protein to the proteasome complex and accelerates UBD degradation and that of its conjugates.

Its subcellular location is the nucleus. In terms of biological role, specific down-regulator of the NEDD8 conjugation system. Recruits NEDD8, UBD, and their conjugates to the proteasome for degradation. The protein is NEDD8 ultimate buster 1 (Nub1) of Mus musculus (Mouse).